A 105-amino-acid polypeptide reads, in one-letter code: Protein U4 (105 aa).

Residues 5-25 (FLLFLLLLVLVINPSLVVNMV) form a helical membrane-spanning segment.

The protein belongs to the nanovirus U4 protein family.

The protein localises to the membrane. The chain is Protein U4 (DNA-U4) from Faba bean necrotic yellows virus (isolate Egyptian EV1-93) (FBNYV).